A 443-amino-acid chain; its full sequence is Delta(6)-fatty-acid desaturase fat-3 (443 aa).

Positions 1-71 (MVVDKNASGL…DLLKKHGEHD (71 aa)) constitute a Cytochrome b5 heme-binding domain. A run of 3 helical transmembrane segments spans residues 136–156 (IMAFAFYLQYLGWYITSACLL), 296–316 (TIVGHWAWVFYQLFLLPTWPL), and 318–338 (VAYFIISQMGGGLLIAHVVTF).

It belongs to the fatty acid desaturase type 1 family.

Its subcellular location is the membrane. The enzyme catalyses (9Z,12Z)-octadecadienoyl-CoA + 2 Fe(II)-[cytochrome b5] + O2 + 2 H(+) = (6Z,9Z,12Z)-octadecatrienoyl-CoA + 2 Fe(III)-[cytochrome b5] + 2 H2O. The catalysed reaction is (9Z,12Z,15Z)-octadecatrienoyl-CoA + 2 Fe(II)-[cytochrome b5] + O2 + 2 H(+) = (6Z,9Z,12Z,15Z)-octadecatetraenoyl-CoA + 2 Fe(III)-[cytochrome b5] + 2 H2O. The protein operates within lipid metabolism; polyunsaturated fatty acid biosynthesis. Can function as a Delta(6) fatty acid desaturase. Introduces a double bond in the fatty acid chain 6 carbons away from carboxy terminal to biosynthesize polyunsaturated fatty acids (PUFAs) endogenously (PUFAs are essential for membrane structure and many cellular and physiological processes). Acts on a variety of substrates such as linoleoyl-CoA ((9Z,12Z)-octadecadienoyl-CoA, C18:2n-6) and alpha-linolenoyl-CoA ((9Z,12Z,15Z)-octadecatrienoyl-CoA, C18:3n-3) to produce gamma-linolenoyl-CoA ((6Z,9Z,12Z)-octadecatrienoyl-CoA, C18:3n-6) and (6Z,9Z,12Z,15Z)-octadecatetraenoyl-CoA (18:4n-3) respectively. Unlike plants, Caenorhabditis elegans desaturases seem to use fatty acyl-CoAs as substrates. Plays a role in synaptic vesicle recycling by regulating synaptojanin unc-26 localization at synapses. The protein is Delta(6)-fatty-acid desaturase fat-3 (fat-3) of Caenorhabditis elegans.